We begin with the raw amino-acid sequence, 89 residues long: Small ribosomal subunit protein uS15 (89 aa).

This sequence belongs to the universal ribosomal protein uS15 family. As to quaternary structure, part of the 30S ribosomal subunit. Forms a bridge to the 50S subunit in the 70S ribosome, contacting the 23S rRNA.

Functionally, one of the primary rRNA binding proteins, it binds directly to 16S rRNA where it helps nucleate assembly of the platform of the 30S subunit by binding and bridging several RNA helices of the 16S rRNA. In terms of biological role, forms an intersubunit bridge (bridge B4) with the 23S rRNA of the 50S subunit in the ribosome. In Gloeothece citriformis (strain PCC 7424) (Cyanothece sp. (strain PCC 7424)), this protein is Small ribosomal subunit protein uS15.